The following is a 303-amino-acid chain: Hemolysin E, chromosomal (303 aa).

An intrachain disulfide couples Cys87 to Cys285. Residues 183-203 (AGVVAGPFGLIISYSIAAGVV) traverse the membrane as a helical segment.

As to quaternary structure, monomer and oligomer. In periplasm, it is present as a monomer, while in outer membrane vesicles, it oligomerizes to form a pore structure that is active. The pore is formed by a dodecamer. In terms of processing, in periplasm, it forms a disulfide bond between Cys-87 and Cys-285, which prevents the oligomerization. In outer membrane vesicles, the redox status prevents formation of the disulfide bond, leading to oligomerization and pore formation.

It is found in the secreted. It localises to the periplasm. Its subcellular location is the host cell membrane. In terms of biological role, toxin, which has some hemolytic activity towards mammalian cells. Acts by forming a pore-like structure upon contact with mammalian cells. The sequence is that of Hemolysin E, chromosomal (hlyE) from Escherichia coli (strain K12).